The primary structure comprises 293 residues: Outer membrane protein assembly factor BamD (293 aa).

The signal sequence occupies residues Met-1 to Gly-26. Cys-27 is lipidated: N-palmitoyl cysteine. The S-diacylglycerol cysteine moiety is linked to residue Cys-27.

It belongs to the BamD family. Part of the Bam complex.

It is found in the cell outer membrane. Part of the outer membrane protein assembly complex, which is involved in assembly and insertion of beta-barrel proteins into the outer membrane. This chain is Outer membrane protein assembly factor BamD, found in Xylella fastidiosa (strain Temecula1 / ATCC 700964).